Reading from the N-terminus, the 89-residue chain is Small ribosomal subunit protein uS15 (89 aa).

The protein belongs to the universal ribosomal protein uS15 family. Part of the 30S ribosomal subunit. Forms a bridge to the 50S subunit in the 70S ribosome, contacting the 23S rRNA.

One of the primary rRNA binding proteins, it binds directly to 16S rRNA where it helps nucleate assembly of the platform of the 30S subunit by binding and bridging several RNA helices of the 16S rRNA. In terms of biological role, forms an intersubunit bridge (bridge B4) with the 23S rRNA of the 50S subunit in the ribosome. This Prochlorococcus marinus (strain MIT 9215) protein is Small ribosomal subunit protein uS15.